We begin with the raw amino-acid sequence, 222 residues long: Potassium-transporting ATPase KdpC subunit (222 aa).

Residues 13–35 (WAGLRSLLVLTVVTGVLYPLAVT) traverse the membrane as a helical segment. The interval 136-162 (TADHKVKPSDVPADAVTSSGSGLDPDI) is disordered.

Belongs to the KdpC family. The system is composed of three essential subunits: KdpA, KdpB and KdpC.

Its subcellular location is the cell membrane. Its function is as follows. Part of the high-affinity ATP-driven potassium transport (or Kdp) system, which catalyzes the hydrolysis of ATP coupled with the electrogenic transport of potassium into the cytoplasm. This subunit acts as a catalytic chaperone that increases the ATP-binding affinity of the ATP-hydrolyzing subunit KdpB by the formation of a transient KdpB/KdpC/ATP ternary complex. This Streptomyces avermitilis (strain ATCC 31267 / DSM 46492 / JCM 5070 / NBRC 14893 / NCIMB 12804 / NRRL 8165 / MA-4680) protein is Potassium-transporting ATPase KdpC subunit.